Reading from the N-terminus, the 268-residue chain is MGNKKTLEGKVAIVTGGASGIGETAARVFANLGARAVVIADIQSELGREVAESIGAKRCSYVQCDIGDEEQVKSMVEWTATTYGALDVMFCNAGIMSKAESAQTVLELDMSKFDEVMRVNTRGTSACVKQAARKMVELGTKGGAIVCTSSPLASRGGYIDTDYVMSKHAVMGLVRSASMQLGAHGIRVNSVSPMAVLTPLTRRMGLATPADVENAFGRFTSLKGVALTAEHVAEAAAFLASDEAAFITGHDLMVDGGLLCLPFFAPTS.

NAD(+) is bound by residues 16 to 22, 41 to 43, 65 to 66, N92, 163 to 167, and 196 to 200; these read GGASGIG, DIQ, DI, YVMSK, and VLTPL.

The protein belongs to the short-chain dehydrogenases/reductases (SDR) family.

The enzyme catalyses (S)-8-oxocitronellyl enol = cis-trans-nepetalactol. Functions as a non-oxidoreductive cyclase to promote the formation of cis-trans-nepetalactol. Cis-trans-nepetalactol is then oxidized by NEPS1 into cis-trans-nepetalactone, which belongs to a family of metabolites that are both insect-repellent and have euphoric effect in cats. Binds NAD(+) as classical short-chain dehydrogenase/reductase (SDR), but does not utilize it for its redox-neutral cyclase activity. This Nepeta racemosa (Catmint) protein is (+)-cis,trans-nepetalactol synthase NEPS2.